Reading from the N-terminus, the 388-residue chain is Alcohol dehydrogenase-like 1 (388 aa).

Residues Cys-53, Thr-55, His-76, Cys-106, Cys-109, Cys-112, Cys-120, and Cys-185 each coordinate Zn(2+). 2 residues coordinate an alcohol: Thr-55 and His-76. Position 55 (Thr-55) interacts with NAD(+). NAD(+) is bound by residues 210–215, Asp-234, Lys-239, 304–306, Phe-331, and Arg-381; these read GLGAVG and LGM.

Belongs to the zinc-containing alcohol dehydrogenase family. Class-III subfamily. Homodimer. Zn(2+) serves as cofactor.

It is found in the cytoplasm. It catalyses the reaction a primary alcohol + NAD(+) = an aldehyde + NADH + H(+). The catalysed reaction is a secondary alcohol + NAD(+) = a ketone + NADH + H(+). This Arabidopsis thaliana (Mouse-ear cress) protein is Alcohol dehydrogenase-like 1.